A 348-amino-acid chain; its full sequence is GMP reductase 2 (348 aa).

NADP(+) contacts are provided by residues 26–27, lysine 78, 129–131, and 180–181; these read SR, DVA, and IG. Glycine 181, glycine 183, and cysteine 186 together coordinate K(+). Catalysis depends on cysteine 186, which acts as the Thioimidate intermediate. Catalysis depends on threonine 188, which acts as the Proton donor/acceptor. K(+) is bound at residue arginine 189. Residues 219 to 221, 242 to 243, 268 to 270, and 286 to 290 each bind GMP; these read DGG, GG, GMS, and RASEG. Residues methionine 269 and 285–286 contribute to the NADP(+) site; that span reads YR. At lysine 291 the chain carries N6-acetyllysine. Residue 314 to 317 participates in NADP(+) binding; the sequence is STCT.

The protein belongs to the IMPDH/GMPR family. GuaC type 1 subfamily. In terms of assembly, homotetramer.

It carries out the reaction IMP + NH4(+) + NADP(+) = GMP + NADPH + 2 H(+). Functionally, catalyzes the irreversible NADPH-dependent deamination of GMP to IMP. It functions in the conversion of nucleobase, nucleoside and nucleotide derivatives of G to A nucleotides, and in maintaining the intracellular balance of A and G nucleotides. Plays a role in modulating cellular differentiation. The sequence is that of GMP reductase 2 from Mus musculus (Mouse).